A 109-amino-acid polypeptide reads, in one-letter code: Putative double-stranded DNA mimic protein YciU (109 aa).

Belongs to the putative dsDNA mimic protein family.

Functionally, may act as a double-stranded DNA (dsDNA) mimic. Probably regulates the activity of a dsDNA-binding protein. This is Putative double-stranded DNA mimic protein YciU from Shigella boydii serotype 18 (strain CDC 3083-94 / BS512).